A 485-amino-acid polypeptide reads, in one-letter code: BTB/POZ domain-containing protein YLR108C (485 aa).

The 96-residue stretch at 26-121 (EVFKIRIGQK…LIKEYDYHFT (96 aa)) folds into the BTB domain.

It is found in the nucleus. The chain is BTB/POZ domain-containing protein YLR108C from Saccharomyces cerevisiae (strain ATCC 204508 / S288c) (Baker's yeast).